The sequence spans 203 residues: ATP-dependent Clp protease proteolytic subunit (203 aa).

The active-site Nucleophile is the serine 107. Histidine 132 is an active-site residue.

The protein belongs to the peptidase S14 family. Fourteen ClpP subunits assemble into 2 heptameric rings which stack back to back to give a disk-like structure with a central cavity, resembling the structure of eukaryotic proteasomes.

The protein resides in the cytoplasm. It catalyses the reaction Hydrolysis of proteins to small peptides in the presence of ATP and magnesium. alpha-casein is the usual test substrate. In the absence of ATP, only oligopeptides shorter than five residues are hydrolyzed (such as succinyl-Leu-Tyr-|-NHMec, and Leu-Tyr-Leu-|-Tyr-Trp, in which cleavage of the -Tyr-|-Leu- and -Tyr-|-Trp bonds also occurs).. In terms of biological role, cleaves peptides in various proteins in a process that requires ATP hydrolysis. Has a chymotrypsin-like activity. Plays a major role in the degradation of misfolded proteins. The sequence is that of ATP-dependent Clp protease proteolytic subunit from Shewanella frigidimarina (strain NCIMB 400).